A 292-amino-acid chain; its full sequence is MSLVSAALFGLLQALTEFLPVSSTAHLLVFGELLGHSLDDRRFRAFVTIIQAGTTLAVLVYFRADIARLVAAAARGLARGRPFGTPEARLGWYIVLGTVPAALAGKLLEHRIEALGNWVIAGSLVALGLVLLAAERLASHRRRVEDVGAGDALLIGVAQALALVPGSSRSGTTITGGMLLGFTREAAARFSFLLSVPITLAAGAYKLWSTVPDLRGEAAWTVATVVGTVVSAVAGYLVIDWLLAWLRTRTTYVFVVWRLAAGAAIAALILSGVLPAGAEAPPPPPPALHAAP.

7 helical membrane passes run 1–21 (MSLVSAALFGLLQALTEFLPV), 46–66 (FVTIIQAGTTLAVLVYFRADI), 90–110 (LGWYIVLGTVPAALAGKLLEH), 114–134 (ALGNWVIAGSLVALGLVLLAA), 192–212 (FLLSVPITLAAGAYKLWSTVP), 225–245 (VVGTVVSAVAGYLVIDWLLAW), and 253–273 (VFVVWRLAAGAAIAALILSGV).

It belongs to the UppP family.

Its subcellular location is the cell inner membrane. It catalyses the reaction di-trans,octa-cis-undecaprenyl diphosphate + H2O = di-trans,octa-cis-undecaprenyl phosphate + phosphate + H(+). In terms of biological role, catalyzes the dephosphorylation of undecaprenyl diphosphate (UPP). Confers resistance to bacitracin. The polypeptide is Undecaprenyl-diphosphatase (Anaeromyxobacter dehalogenans (strain 2CP-1 / ATCC BAA-258)).